A 74-amino-acid polypeptide reads, in one-letter code: ATP synthase subunit c (74 aa).

2 helical membrane passes run 8 to 28 and 52 to 72; these read FIGI…VSNI and IGAG…MLLI.

It belongs to the ATPase C chain family. In terms of assembly, F-type ATPases have 2 components, F(1) - the catalytic core - and F(0) - the membrane proton channel. F(1) has five subunits: alpha(3), beta(3), gamma(1), delta(1), epsilon(1). F(0) has three main subunits: a(1), b(2) and c(10-14). The alpha and beta chains form an alternating ring which encloses part of the gamma chain. F(1) is attached to F(0) by a central stalk formed by the gamma and epsilon chains, while a peripheral stalk is formed by the delta and b chains.

The protein localises to the cell inner membrane. F(1)F(0) ATP synthase produces ATP from ADP in the presence of a proton or sodium gradient. F-type ATPases consist of two structural domains, F(1) containing the extramembraneous catalytic core and F(0) containing the membrane proton channel, linked together by a central stalk and a peripheral stalk. During catalysis, ATP synthesis in the catalytic domain of F(1) is coupled via a rotary mechanism of the central stalk subunits to proton translocation. Its function is as follows. Key component of the F(0) channel; it plays a direct role in translocation across the membrane. A homomeric c-ring of between 10-14 subunits forms the central stalk rotor element with the F(1) delta and epsilon subunits. This chain is ATP synthase subunit c, found in Rickettsia prowazekii (strain Madrid E).